Here is a 275-residue protein sequence, read N- to C-terminus: Elongation factor Ts (275 aa).

The segment at 76–79 (TDFV) is involved in Mg(2+) ion dislocation from EF-Tu.

Belongs to the EF-Ts family.

The protein localises to the cytoplasm. Its function is as follows. Associates with the EF-Tu.GDP complex and induces the exchange of GDP to GTP. It remains bound to the aminoacyl-tRNA.EF-Tu.GTP complex up to the GTP hydrolysis stage on the ribosome. This chain is Elongation factor Ts, found in Corynebacterium diphtheriae (strain ATCC 700971 / NCTC 13129 / Biotype gravis).